Here is a 555-residue protein sequence, read N- to C-terminus: Vacuolar fusion protein MON1 homolog A (555 aa).

Residues methionine 1 to glutamate 12 are compositionally biased toward basic and acidic residues. The tract at residues methionine 1–isoleucine 90 is disordered. Residues serine 31 and serine 56 each carry the phosphoserine modification. Threonine 61 carries the post-translational modification Phosphothreonine. Residue serine 91 is modified to Phosphoserine. The tract at residues methionine 112 to glutamate 149 is disordered. The span at proline 130–alanine 139 shows a compositional bias: basic and acidic residues.

Belongs to the MON1/SAND family. Interacts with CCZ1. Found in a complex with RMC1, CCZ1, MON1A and MON1B. The MON1A-CCZ1B complex interacts with RIMOC1. The MON1A-CCZ1B complex interacts with RAB7A and this interaction is enhanced in the presence of RIMOC1.

In terms of biological role, plays an important role in membrane trafficking through the secretory apparatus. Not involved in endocytic trafficking to lysosomes. Acts in concert with CCZ1, as a guanine exchange factor (GEF) for RAB7, promotes the exchange of GDP to GTP, converting it from an inactive GDP-bound form into an active GTP-bound form. The polypeptide is Vacuolar fusion protein MON1 homolog A (MON1A) (Bos taurus (Bovine)).